The chain runs to 485 residues: Alpha,alpha-trehalose-phosphate synthase [UDP-forming] (485 aa).

Y99 and D153 together coordinate D-glucose 6-phosphate. UDP is bound by residues R290 and K295. Positions 290 and 295 each coordinate UDP-alpha-D-glucose. R328 is a D-glucose 6-phosphate binding site. UDP is bound by residues I367 and 393–397 (LVSYE). Residues I367 and 389 to 397 (DGMNLVSYE) each bind UDP-alpha-D-glucose.

It belongs to the glycosyltransferase 20 family.

The enzyme catalyses D-glucose 6-phosphate + UDP-alpha-D-glucose = alpha,alpha-trehalose 6-phosphate + UDP + H(+). Its pathway is carbohydrate biosynthesis. Synthase catalytic subunit of the trehalose synthase complex that catalyzes the production of trehalose from glucose-6-phosphate and UDP-alpha-D-glucose in a two step process. The chain is Alpha,alpha-trehalose-phosphate synthase [UDP-forming] from Zygosaccharomyces rouxii.